We begin with the raw amino-acid sequence, 699 residues long: Protein Scribble homolog let-413 (699 aa).

LRR repeat units follow at residues Lys37–Arg59, His60–Leu81, Gln83–Cys104, Leu106–Cys127, Ser129–Leu150, Asn152–Arg174, Lys175–Leu196, Ser198–Cys219, Met221–Met242, Asn244–Leu265, Arg267–Cys288, Ser290–Leu311, Gln313–Cys334, Ser336–Cys357, Asn359–Leu380, and Lys382–Arg403. Residues Ala584–Ser665 enclose the PDZ domain. The tract at residues Arg656 to Ser699 is disordered. 2 stretches are compositionally biased toward polar residues: residues Ser659 to Leu676 and Pro684 to Ser699.

It belongs to the LAP (LRR and PDZ) protein family. As to expression, expressed in the terminal web of the intestine. Expressed in seam cells. Expressed in the basolateral surfaces of epithelia and the nervous system. Expressed in the intestine, epidermis, excretory canal, reproductive system including vulva, uterus and spermatheca, in both larval and adult stage animals.

The protein localises to the basolateral cell membrane. Its function is as follows. Critical role in assembling adherens junctions; adapter protein involved in polarizing protein trafficking in epithelial cells. Necessary to maintain, not establish, the entire terminal web (organelle-depleted, intermediate filament-rich layer of cytoplasm that underlies the apical microvilli of polarized epithelial cells) or brush border assembly at the apical surface gut cells. Required for correct localization of ifb-2 intermediate filaments in the terminal web. Required for dlg-1 and hmr-1 lateral localization. Maintains cell polarity by correctly positioning adherens junction protein components including ajm-1 and hmp-1 at discrete subapical positions. Plays a role in the correct localization of the dlg-1-ajm-1 complex, polarity protein par-3, and actin microfilament to the apical junction of spermatheca cells, and is required for ovulation. Regulates the establishment of newly-formed epithelia in conjunction with dlg-1. Required in the epidermis during larval development. Plays a role in cellular junction integrity and in the directed outgrowth of seam cells, towards neighboring seam cells, during larval development; probably acts by promoting the assembly and stability of dlg-1 at apical junctions. The protein is Protein Scribble homolog let-413 of Caenorhabditis elegans.